An 82-amino-acid polypeptide reads, in one-letter code: Putative membrane protein insertion efficiency factor (82 aa).

The segment at 63–82 is disordered; the sequence is PGGHDPVPESTILSKEKSVK.

Belongs to the UPF0161 family.

The protein resides in the cell inner membrane. Its function is as follows. Could be involved in insertion of integral membrane proteins into the membrane. The sequence is that of Putative membrane protein insertion efficiency factor from Protochlamydia amoebophila (strain UWE25).